A 135-amino-acid chain; its full sequence is Small ribosomal subunit protein uS12 (135 aa).

Residues 1-20 (MPTINQLVRKGRHSKVTKSK) form a disordered region. A compositionally biased stretch (basic residues) spans 9-18 (RKGRHSKVTK). At D102 the chain carries 3-methylthioaspartic acid.

It belongs to the universal ribosomal protein uS12 family. As to quaternary structure, part of the 30S ribosomal subunit. Contacts proteins S8 and S17. May interact with IF1 in the 30S initiation complex.

Its function is as follows. With S4 and S5 plays an important role in translational accuracy. In terms of biological role, interacts with and stabilizes bases of the 16S rRNA that are involved in tRNA selection in the A site and with the mRNA backbone. Located at the interface of the 30S and 50S subunits, it traverses the body of the 30S subunit contacting proteins on the other side and probably holding the rRNA structure together. The combined cluster of proteins S8, S12 and S17 appears to hold together the shoulder and platform of the 30S subunit. The chain is Small ribosomal subunit protein uS12 from Lactobacillus helveticus (strain DPC 4571).